Consider the following 240-residue polypeptide: MTELPIDENTPRILIVEDEPKLGQLLIDYLRAASYAPTLISHGDQVLPYVRQTPPDLILLDLMLPGTDGLTLCREIRRFSDIPIVMVTAKIEEIDRLLGLEIGADDYICKPYSPREVVARVKTILRRCKPQRELQQQDAESPLIIDEGRFQASWRGKMLDLTPAEFRLLKTLSHEPGKVFSREQLLNHLYDDYRVVTDRTIDSHIKNLRRKLESLDAEQSFIRAVYGVGYRWEADACRIV.

The Response regulatory domain occupies 12-125; it reads RILIVEDEPK…EVVARVKTIL (114 aa). A 4-aspartylphosphate modification is found at D61. A DNA-binding region (ompR/PhoB-type) is located at residues 131–234; it reads QRELQQQDAE…VYGVGYRWEA (104 aa).

Phosphorylated by BaeS.

Its subcellular location is the cytoplasm. Member of the two-component regulatory system BaeS/BaeR. Activates the mdtABCD operon. In Escherichia coli O6:H1 (strain CFT073 / ATCC 700928 / UPEC), this protein is Transcriptional regulatory protein BaeR (baeR).